We begin with the raw amino-acid sequence, 182 residues long: MINSMQFLYLVASYLFGNILTAYIVTKWRHDVDIRNEGSGNPGARNMGRVYGKGYFIVTFLGDAIKGAIVVSIAEYLFGDSTFVMLALLAVLLGHIYPIVFKGKGGKGISTFIGGLIAFDYLIALTLVAVFIIFYLIFKGFTKPGLITIACLPVCMILYSYSIVTTILSALIIVLILYVNRD.

The next 5 membrane-spanning stretches (helical) occupy residues 5–25 (MQFL…AYIV), 54–74 (GYFI…VSIA), 81–101 (STFV…PIVF), 117–137 (IAFD…FYLI), and 157–177 (ILYS…VLIL).

The protein belongs to the PlsY family. In terms of assembly, probably interacts with PlsX.

It localises to the cell membrane. The catalysed reaction is an acyl phosphate + sn-glycerol 3-phosphate = a 1-acyl-sn-glycero-3-phosphate + phosphate. Its pathway is lipid metabolism; phospholipid metabolism. In terms of biological role, catalyzes the transfer of an acyl group from acyl-phosphate (acyl-PO(4)) to glycerol-3-phosphate (G3P) to form lysophosphatidic acid (LPA). This enzyme utilizes acyl-phosphate as fatty acyl donor, but not acyl-CoA or acyl-ACP. This is Glycerol-3-phosphate acyltransferase 1 from Bacillus cereus (strain ATCC 10987 / NRS 248).